Here is a 141-residue protein sequence, read N- to C-terminus: Nucleoside diphosphate kinase (141 aa).

Residues K11, F59, R87, T93, R104, and N114 each coordinate ATP. H117 (pros-phosphohistidine intermediate) is an active-site residue.

This sequence belongs to the NDK family. In terms of assembly, homotetramer. Mg(2+) serves as cofactor.

It is found in the cytoplasm. It catalyses the reaction a 2'-deoxyribonucleoside 5'-diphosphate + ATP = a 2'-deoxyribonucleoside 5'-triphosphate + ADP. It carries out the reaction a ribonucleoside 5'-diphosphate + ATP = a ribonucleoside 5'-triphosphate + ADP. Major role in the synthesis of nucleoside triphosphates other than ATP. The ATP gamma phosphate is transferred to the NDP beta phosphate via a ping-pong mechanism, using a phosphorylated active-site intermediate. This Burkholderia mallei (strain NCTC 10247) protein is Nucleoside diphosphate kinase.